The following is a 372-amino-acid chain: Ketol-acid reductoisomerase (NADP(+)) (372 aa).

The tract at residues 1–25 is disordered; that stretch reads MTETKTQTETETDEEEGTDTDTALD. Residues 10-19 show a composition bias toward acidic residues; it reads TETDEEEGTD. Residues 24 to 205 enclose the KARI N-terminal Rossmann domain; that stretch reads LDTTIYYDDD…GCTRAGAIET (182 aa). NADP(+) contacts are provided by residues 49 to 52, Ser-75, Ser-77, and 107 to 110; these read YGSQ and DTVQ. His-131 is a catalytic residue. NADP(+) is bound at residue Gly-157. Residues 206-351 form the KARI C-terminal knotted domain; the sequence is TFREETETDL…EPLRDLFAWS (146 aa). Residues Asp-214, Glu-218, Glu-250, and Glu-254 each contribute to the Mg(2+) site. Position 275 (Ser-275) interacts with substrate. The segment at 351–372 is disordered; that stretch reads SDNEETNDESDVVSEPEAAADD. Residues 352 to 372 show a composition bias toward acidic residues; sequence DNEETNDESDVVSEPEAAADD.

Belongs to the ketol-acid reductoisomerase family. Requires Mg(2+) as cofactor.

The catalysed reaction is (2R)-2,3-dihydroxy-3-methylbutanoate + NADP(+) = (2S)-2-acetolactate + NADPH + H(+). It catalyses the reaction (2R,3R)-2,3-dihydroxy-3-methylpentanoate + NADP(+) = (S)-2-ethyl-2-hydroxy-3-oxobutanoate + NADPH + H(+). The protein operates within amino-acid biosynthesis; L-isoleucine biosynthesis; L-isoleucine from 2-oxobutanoate: step 2/4. It functions in the pathway amino-acid biosynthesis; L-valine biosynthesis; L-valine from pyruvate: step 2/4. In terms of biological role, involved in the biosynthesis of branched-chain amino acids (BCAA). Catalyzes an alkyl-migration followed by a ketol-acid reduction of (S)-2-acetolactate (S2AL) to yield (R)-2,3-dihydroxy-isovalerate. In the isomerase reaction, S2AL is rearranged via a Mg-dependent methyl migration to produce 3-hydroxy-3-methyl-2-ketobutyrate (HMKB). In the reductase reaction, this 2-ketoacid undergoes a metal-dependent reduction by NADPH to yield (R)-2,3-dihydroxy-isovalerate. The sequence is that of Ketol-acid reductoisomerase (NADP(+)) from Haloquadratum walsbyi (strain DSM 16790 / HBSQ001).